Here is a 282-residue protein sequence, read N- to C-terminus: Aquaporin-6 (282 aa).

The Cytoplasmic portion of the chain corresponds to 1 to 25 (MDAVEPGGRGWASMLACRLWKAISR). Residues 26–46 (ALFAEFLATGLYVFFGVGSVM) form a helical membrane-spanning segment. At 47–54 (RWPTALPS) the chain is on the extracellular side. A helical transmembrane segment spans residues 55 to 73 (VLQIAITFNLVTAMAVQVT). Over 74 to 78 (WKASG) the chain is Cytoplasmic. The segment at residues 79–88 (AHANPAVTLA) is an intramembrane region (discontinuously helical). Positions 82 to 84 (NPA) match the NPA 1 motif. Residues 89–99 (FLVGSHISLPR) are Cytoplasmic-facing. A helical membrane pass occupies residues 100–121 (AVAYVAAQLVGATVGAALLYGV). The Extracellular segment spans residues 122–141 (MPGDIRETLGINVVRNSVST). The helical transmembrane segment at 142–162 (GQAVAVELLLTLQLVLCVFAS) threads the bilayer. Over 163-168 (TDSRQT) the chain is Cytoplasmic. Residues 169 to 188 (SGSPATMIGISVALGHLIGI) form a helical membrane-spanning segment. The Extracellular portion of the chain corresponds to 189–192 (HFTG). Residues 193–205 (CSMNPARSFGPAI) constitute an intramembrane region (discontinuously helical). The NPA 2 signature appears at 196–198 (NPA). Residues 206–213 (IIGKFTVH) are Extracellular-facing. The helical transmembrane segment at 214 to 234 (WVFWVGPLMGALLASLIYNFV) threads the bilayer. The Cytoplasmic portion of the chain corresponds to 235 to 282 (LFPDTKTLAQRLAILTGTVEVGTGAGAGAEPLKKESQPGSGAVEMESV). The segment at 260 to 282 (GAGAEPLKKESQPGSGAVEMESV) is disordered.

It belongs to the MIP/aquaporin (TC 1.A.8) family. In terms of assembly, homotetramer; each monomer provides an independent solute pore.

The protein resides in the cytoplasmic vesicle membrane. The enzyme catalyses nitrate(in) = nitrate(out). The catalysed reaction is iodide(out) = iodide(in). It catalyses the reaction bromide(in) = bromide(out). It carries out the reaction chloride(in) = chloride(out). The enzyme catalyses Na(+)(in) = Na(+)(out). The catalysed reaction is H2O(in) = H2O(out). It catalyses the reaction CO2(out) = CO2(in). It carries out the reaction NH4(+)(in) = NH4(+)(out). Functionally, aquaporins form homotetrameric transmembrane channels, with each monomer independently mediating water transport across the plasma membrane along its osmotic gradient. Unlike classical aquaporins, AQP6 is an intracellular channel with selective anion permeability, particularly for nitrate, and exhibits very low water permeability. It may also facilitate the transport of gases, such as CO2 and NH4(+), as demonstrated in vitro. This is Aquaporin-6 from Homo sapiens (Human).